A 137-amino-acid polypeptide reads, in one-letter code: Large ribosomal subunit protein bL17 (137 aa).

Belongs to the bacterial ribosomal protein bL17 family. In terms of assembly, part of the 50S ribosomal subunit. Contacts protein L32.

The sequence is that of Large ribosomal subunit protein bL17 from Caulobacter vibrioides (strain ATCC 19089 / CIP 103742 / CB 15) (Caulobacter crescentus).